The sequence spans 381 residues: L-lactate dehydrogenase (381 aa).

Positions 1-380 constitute an FMN hydroxy acid dehydrogenase domain; it reads MIISASTDYR…SADSLVRELG (380 aa). Tyr-24 is a substrate binding site. FMN is bound by residues Ser-106 and Gln-127. Tyr-129 serves as a coordination point for substrate. FMN is bound at residue Thr-155. Arg-164 provides a ligand contact to substrate. Lys-251 contributes to the FMN binding site. His-275 functions as the Proton acceptor in the catalytic mechanism. Arg-278 is a binding site for substrate. 306–330 is a binding site for FMN; the sequence is DSGIRTGLDVVRMIALGADSVLLGR.

The protein belongs to the FMN-dependent alpha-hydroxy acid dehydrogenase family. Homotetramer. It depends on FMN as a cofactor.

Its subcellular location is the cell inner membrane. It carries out the reaction (S)-lactate + A = pyruvate + AH2. Functionally, catalyzes the conversion of L-lactate to pyruvate. Is coupled to the respiratory chain. This Pseudomonas aeruginosa (strain LESB58) protein is L-lactate dehydrogenase.